We begin with the raw amino-acid sequence, 216 residues long: Soluble inorganic pyrophosphatase 3 (216 aa).

A compositionally biased stretch (acidic residues) spans 1–10 (MSEEAYEETQ). Residues 1 to 21 (MSEEAYEETQESSQSPRPVPK) form a disordered region. Lys66 and Arg80 together coordinate substrate. Catalysis depends on Tyr88, which acts as the Proton donor. Tyr92 provides a ligand contact to substrate. The Mg(2+) site is built by Asp102, Asp107, and Asp139. Residue Tyr176 participates in substrate binding.

Belongs to the PPase family. Requires Mg(2+) as cofactor. In terms of tissue distribution, expressed preferentially in stamen, pollen and flower, and at a low level in lateral roots and root elongation zones.

The protein localises to the cytoplasm. The enzyme catalyses diphosphate + H2O = 2 phosphate + H(+). The protein is Soluble inorganic pyrophosphatase 3 of Arabidopsis thaliana (Mouse-ear cress).